The chain runs to 389 residues: Methylthioribose kinase (389 aa).

ATP-binding positions include Asn-37, Lys-52, and 106–108 (EDL). Position 224 (Asp-224) interacts with substrate. 241 to 243 (DPE) lines the ATP pocket. Arg-331 is a substrate binding site.

It belongs to the methylthioribose kinase family. Homodimer.

It carries out the reaction 5-(methylsulfanyl)-D-ribose + ATP = 5-(methylsulfanyl)-alpha-D-ribose 1-phosphate + ADP + H(+). Its pathway is amino-acid biosynthesis; L-methionine biosynthesis via salvage pathway; S-methyl-5-thio-alpha-D-ribose 1-phosphate from S-methyl-5'-thioadenosine (hydrolase route): step 2/2. Its function is as follows. Catalyzes the phosphorylation of methylthioribose into methylthioribose-1-phosphate. The protein is Methylthioribose kinase of Exiguobacterium sibiricum (strain DSM 17290 / CCUG 55495 / CIP 109462 / JCM 13490 / 255-15).